The following is an 82-amino-acid chain: Small ribosomal subunit protein bS18 (82 aa).

The protein belongs to the bacterial ribosomal protein bS18 family. Part of the 30S ribosomal subunit. Forms a tight heterodimer with protein bS6.

Binds as a heterodimer with protein bS6 to the central domain of the 16S rRNA, where it helps stabilize the platform of the 30S subunit. The protein is Small ribosomal subunit protein bS18 of Chlamydia felis (strain Fe/C-56) (Chlamydophila felis).